The chain runs to 130 residues: Small ribosomal subunit protein uS9 (130 aa).

This sequence belongs to the universal ribosomal protein uS9 family.

The protein is Small ribosomal subunit protein uS9 of Vibrio vulnificus (strain CMCP6).